Here is a 35-residue protein sequence, read N- to C-terminus: Mu-theraphotoxin-Hhn1a (35 aa).

3 disulfides stabilise this stretch: Cys-2-Cys-17, Cys-9-Cys-24, and Cys-16-Cys-31.

Belongs to the neurotoxin 10 (Hwtx-1) family. 22 (Htx-4) subfamily. Monomer. As to expression, expressed by the venom gland.

It is found in the secreted. Inhibits selectively tetrodotoxin-sensitive voltage-gated sodium channels (Nav). Does not act by binding to receptor site 3 to slow the inactivation kinetics of sodium currents. In Cyriopagopus hainanus (Chinese bird spider), this protein is Mu-theraphotoxin-Hhn1a.